The sequence spans 617 residues: Putative type VI secretion system protein VgrGA (617 aa).

Disordered stretches follow at residues 325-344 (GQQP…TLSN) and 449-469 (RTFH…TRTS).

The protein belongs to the VgrG protein family.

A Vgr protein that is probably part of a type VI secretion system (T6SS). May be required for export of proteins involved in Rhs-mediated cellular contact-dependent growth inhibition (CDI). This Dickeya dadantii (strain 3937) (Erwinia chrysanthemi (strain 3937)) protein is Putative type VI secretion system protein VgrGA (vgrGA).